Here is a 79-residue protein sequence, read N- to C-terminus: Sulfur carrier protein TusA (79 aa).

Cys-16 serves as the catalytic Cysteine persulfide intermediate.

This sequence belongs to the sulfur carrier protein TusA family.

Its subcellular location is the cytoplasm. Sulfur carrier protein which probably makes part of a sulfur-relay system. This is Sulfur carrier protein TusA from Pseudomonas aeruginosa (strain LESB58).